The chain runs to 351 residues: UDP-N-acetylglucosamine--N-acetylmuramyl-(pentapeptide) pyrophosphoryl-undecaprenol N-acetylglucosamine transferase (351 aa).

UDP-N-acetyl-alpha-D-glucosamine contacts are provided by residues 13-15, N125, R161, S189, I241, 260-265, and Q285; these read TGG and ALTVCE.

Belongs to the glycosyltransferase 28 family. MurG subfamily.

Its subcellular location is the cell inner membrane. The catalysed reaction is di-trans,octa-cis-undecaprenyl diphospho-N-acetyl-alpha-D-muramoyl-L-alanyl-D-glutamyl-meso-2,6-diaminopimeloyl-D-alanyl-D-alanine + UDP-N-acetyl-alpha-D-glucosamine = di-trans,octa-cis-undecaprenyl diphospho-[N-acetyl-alpha-D-glucosaminyl-(1-&gt;4)]-N-acetyl-alpha-D-muramoyl-L-alanyl-D-glutamyl-meso-2,6-diaminopimeloyl-D-alanyl-D-alanine + UDP + H(+). Its pathway is cell wall biogenesis; peptidoglycan biosynthesis. Cell wall formation. Catalyzes the transfer of a GlcNAc subunit on undecaprenyl-pyrophosphoryl-MurNAc-pentapeptide (lipid intermediate I) to form undecaprenyl-pyrophosphoryl-MurNAc-(pentapeptide)GlcNAc (lipid intermediate II). This chain is UDP-N-acetylglucosamine--N-acetylmuramyl-(pentapeptide) pyrophosphoryl-undecaprenol N-acetylglucosamine transferase, found in Haemophilus influenzae (strain PittEE).